Here is a 204-residue protein sequence, read N- to C-terminus: Tumor necrosis factor receptor superfamily member 26 (204 aa).

A signal peptide spans 1–19 (MTRLRLLLLLGLLLRVAVC). Topologically, residues 20-164 (SVNTITLCKI…SQCFCFSKPL (145 aa)) are extracellular. 9 disulfide bridges follow: Cys27/Cys38, Cys39/Cys52, Cys42/Cys61, Cys64/Cys79, Cys82/Cys95, Cys85/Cys103, Cys105/Cys120, Cys123/Cys135, and Cys126/Cys143. TNFR-Cys repeat units follow at residues 27–61 (CKIG…KSEC), 63–103 (PCDS…DRVC), and 104–143 (QCKQ…DTVC). Asn57 carries an N-linked (GlcNAc...) asparagine glycan. The N-linked (GlcNAc...) asparagine glycan is linked to Asn136. The chain crosses the membrane as a helical span at residues 165 to 185 (GIVVIIAAFIIIIGAVIILIL). Over 186 to 204 (KIICYCKRGENIQLSSTML) the chain is Cytoplasmic.

In terms of tissue distribution, expressed in thymus and spleen. Detectable levels in lung.

Its subcellular location is the membrane. The protein is Tumor necrosis factor receptor superfamily member 26 (Tnfrsf26) of Mus musculus (Mouse).